The chain runs to 405 residues: Tyrosine--tRNA ligase (405 aa).

The 'HIGH' region signature appears at 41-50 (PTAPDLHLGH). The 'KMSKS' region signature appears at 225–229 (KMSKS). Residue Lys-228 participates in ATP binding. The S4 RNA-binding domain occupies 342–404 (EPLLVWVLSK…GKKGKFLKII (63 aa)).

It belongs to the class-I aminoacyl-tRNA synthetase family. TyrS type 2 subfamily. As to quaternary structure, homodimer.

It localises to the cytoplasm. It catalyses the reaction tRNA(Tyr) + L-tyrosine + ATP = L-tyrosyl-tRNA(Tyr) + AMP + diphosphate + H(+). Catalyzes the attachment of tyrosine to tRNA(Tyr) in a two-step reaction: tyrosine is first activated by ATP to form Tyr-AMP and then transferred to the acceptor end of tRNA(Tyr). In Leptospira interrogans serogroup Icterohaemorrhagiae serovar Lai (strain 56601), this protein is Tyrosine--tRNA ligase.